Here is a 548-residue protein sequence, read N- to C-terminus: Splicing factor U2af large subunit B (548 aa).

Positions 1–82 (MADDHAAAAD…DRDRDRDKDR (82 aa)) are enriched in basic and acidic residues. The disordered stretch occupies residues 1–156 (MADDHAAAAD…SKRVSGFDMA (156 aa)). Positions 83-93 (DRHHRHHRERR) are enriched in basic residues. Residues 94–120 (EHRDRSDDHDRHRSRDSERRRDHERDG) show a composition bias toward basic and acidic residues. A compositionally biased stretch (basic residues) spans 121–149 (RRRHRSRSRSRSRGRDRRSRSRSRSKSKR). RRM domains lie at 214 to 297 (RRVY…RPTD), 334 to 412 (DRIF…RANQ), and 453 to 539 (QVVS…YPEN).

It belongs to the splicing factor SR family.

It localises to the nucleus. Functionally, necessary for the splicing of pre-mRNA. The sequence is that of Splicing factor U2af large subunit B (U2AF65B) from Oryza sativa subsp. japonica (Rice).